The sequence spans 396 residues: Flavohemoprotein (396 aa).

The 136-residue stretch at 1–136 (MLDAQTIATV…LANVFINREA (136 aa)) folds into the Globin domain. Heme b is bound at residue His85. Active-site charge relay system residues include Tyr95 and Glu135. The reductase stretch occupies residues 147-396 (GGWEGTRDFR…YECFGPHKVL (250 aa)). The region spanning 150–255 (EGTRDFRIVA…VAPAGDFFMA (106 aa)) is the FAD-binding FR-type domain. FAD-binding positions include Tyr188 and 204–207 (RQYS). 268–273 (GVGQTP) provides a ligand contact to NADP(+). 389–392 (CFGP) provides a ligand contact to FAD.

Belongs to the globin family. Two-domain flavohemoproteins subfamily. It in the C-terminal section; belongs to the flavoprotein pyridine nucleotide cytochrome reductase family. Heme b serves as cofactor. It depends on FAD as a cofactor.

The enzyme catalyses 2 nitric oxide + NADPH + 2 O2 = 2 nitrate + NADP(+) + H(+). It catalyses the reaction 2 nitric oxide + NADH + 2 O2 = 2 nitrate + NAD(+) + H(+). Functionally, is involved in NO detoxification in an aerobic process, termed nitric oxide dioxygenase (NOD) reaction that utilizes O(2) and NAD(P)H to convert NO to nitrate, which protects the bacterium from various noxious nitrogen compounds. Therefore, plays a central role in the inducible response to nitrosative stress. In Escherichia coli O6:H1 (strain CFT073 / ATCC 700928 / UPEC), this protein is Flavohemoprotein.